A 104-amino-acid polypeptide reads, in one-letter code: Phosphoribosyl-ATP pyrophosphatase (104 aa).

It belongs to the PRA-PH family.

It localises to the cytoplasm. The catalysed reaction is 1-(5-phospho-beta-D-ribosyl)-ATP + H2O = 1-(5-phospho-beta-D-ribosyl)-5'-AMP + diphosphate + H(+). It participates in amino-acid biosynthesis; L-histidine biosynthesis; L-histidine from 5-phospho-alpha-D-ribose 1-diphosphate: step 2/9. The sequence is that of Phosphoribosyl-ATP pyrophosphatase from Nitrosococcus oceani (strain ATCC 19707 / BCRC 17464 / JCM 30415 / NCIMB 11848 / C-107).